The following is a 240-amino-acid chain: Pyridoxine 5'-phosphate synthase (240 aa).

Residue asparagine 7 participates in 3-amino-2-oxopropyl phosphate binding. Residue 9–10 (DH) coordinates 1-deoxy-D-xylulose 5-phosphate. Arginine 18 serves as a coordination point for 3-amino-2-oxopropyl phosphate. Catalysis depends on histidine 43, which acts as the Proton acceptor. Residues arginine 45 and histidine 50 each contribute to the 1-deoxy-D-xylulose 5-phosphate site. The active-site Proton acceptor is the glutamate 70. Residue threonine 100 coordinates 1-deoxy-D-xylulose 5-phosphate. The active-site Proton donor is the histidine 191. 3-amino-2-oxopropyl phosphate-binding positions include glycine 192 and 213–214 (GH).

It belongs to the PNP synthase family. In terms of assembly, homooctamer; tetramer of dimers.

It localises to the cytoplasm. It carries out the reaction 3-amino-2-oxopropyl phosphate + 1-deoxy-D-xylulose 5-phosphate = pyridoxine 5'-phosphate + phosphate + 2 H2O + H(+). It participates in cofactor biosynthesis; pyridoxine 5'-phosphate biosynthesis; pyridoxine 5'-phosphate from D-erythrose 4-phosphate: step 5/5. Functionally, catalyzes the complicated ring closure reaction between the two acyclic compounds 1-deoxy-D-xylulose-5-phosphate (DXP) and 3-amino-2-oxopropyl phosphate (1-amino-acetone-3-phosphate or AAP) to form pyridoxine 5'-phosphate (PNP) and inorganic phosphate. The chain is Pyridoxine 5'-phosphate synthase from Acaryochloris marina (strain MBIC 11017).